The following is a 36-amino-acid chain: Potassium channel toxin alpha-KTx 1.9 (36 aa).

The protein belongs to the short scorpion toxin superfamily. Potassium channel inhibitor family. Alpha-KTx 01 subfamily. In terms of tissue distribution, expressed by the venom gland.

It localises to the secreted. Potent selective inhibitor of Kv1/KCNA voltage-gated potassium channels. In Centruroides limbatus (Bark scorpion), this protein is Potassium channel toxin alpha-KTx 1.9.